A 309-amino-acid polypeptide reads, in one-letter code: Zinc transporter ZIPB (309 aa).

Over 1 to 22 the chain is Periplasmic; that stretch reads MNQPSSLAADLRGAWHAQAQSH. The chain crosses the membrane as a helical span at residues 23 to 50; sequence PLITLGLAASAAGVVLLLVAGIVNALTG. At 51–55 the chain is on the extracellular side; that stretch reads ENRVH. Residues 56–81 form a helical membrane-spanning segment; sequence VGYAVLGGAAGFAATALGALMALGLR. Over 82-83 the chain is Periplasmic; it reads AI. The chain crosses the membrane as a helical span at residues 84–119; that stretch reads SARTQDAMLGFAAGMMLAASAFSLILPGLDAAGTIV. D89 is a Zn(2+) binding site. Position 99 (M99) interacts with Cd(2+). The Extracellular portion of the chain corresponds to 120–121; it reads GP. A helical transmembrane segment spans residues 122–145; it reads GPAAAAVVALGLGLGVLLMLGLDY. A Zn(2+)-binding site is contributed by D144. Residue D144 participates in Cd(2+) binding. Residues 146–165 lie on the Periplasmic side of the membrane; that stretch reads FTPHEHERTGHQGPEAARVN. A helical membrane pass occupies residues 166–190; it reads RVWLFVLTIILHNLPEGMAIGVSFA. H177 contacts Zn(2+). Residues H177, N178, and E181 each contribute to the Cd(2+) site. E181 is a binding site for Zn(2+). Topologically, residues 191–192 are extracellular; the sequence is TG. Residues 193–222 traverse the membrane as a helical segment; sequence DLRIGLPLTSAIAIQDVPEGLAVALALRAV. Q207 contacts Zn(2+). Q207, D208, and E211 together coordinate Cd(2+). Position 211 (E211) interacts with Zn(2+). The Periplasmic portion of the chain corresponds to 223–224; it reads GL. Residues 225 to 251 form a helical membrane-spanning segment; that stretch reads PIGRAVLVAVASGLMEPLGALVGVGIS. Residue E240 coordinates Cd(2+). Residues 252 to 255 lie on the Extracellular side of the membrane; that stretch reads SGFA. A helical transmembrane segment spans residues 256-275; sequence LAYPISMGLAAGAMIFVVSH. Zn(2+) contacts are provided by H275, E276, and H286. H275 lines the Cd(2+) pocket. Over 276-287 the chain is Periplasmic; that stretch reads EVIPETHRNGHE. The helical transmembrane segment at 288–308 threads the bilayer; that stretch reads TTATVGLMAGFALMMFLDTAL. Residue G309 is a topological domain, extracellular.

This sequence belongs to the ZIP transporter (TC 2.A.5) family. As to quaternary structure, homodimer. Also exists as a monomer.

It is found in the cell inner membrane. The enzyme catalyses Zn(2+)(in) = Zn(2+)(out). It carries out the reaction Cd(2+)(in) = Cd(2+)(out). Selective electrodiffusional channel that mediates the uptake of Zn(2+). Exploits in vivo zinc concentration gradients (maintained by cellular zinc homeostasis) to passively move zinc ions into the cytoplasm. ZIPB-mediated zinc flux is dependent upon pH, but independent of the proton motive force. Is also able to import Cd(2+), but is not permeable to Co(2+), Cu(2+), Fe(2+), Mn(2+) and Ni(2+). The polypeptide is Zinc transporter ZIPB (Bordetella bronchiseptica (strain ATCC BAA-588 / NCTC 13252 / RB50) (Alcaligenes bronchisepticus)).